A 795-amino-acid polypeptide reads, in one-letter code: Cyclin-dependent kinase 11B (795 aa).

Basic and acidic residues predominate over residues 17–60; the sequence is LQEKKRRKEQEEKAEIKRLKNSDDRDSKRDSLEEGELRDHRMEI. The tract at residues 17-412 is disordered; sequence LQEKKRRKEQ…EGDYVPDSPA (396 aa). Phosphoserine occurs at positions 47 and 72. Over residues 95-113 the composition is skewed to basic residues; that stretch reads EKAHHRKDEKRKEKRRHRS. 4 stretches are compositionally biased toward basic and acidic residues: residues 114 to 131, 138 to 227, 238 to 253, and 264 to 276; these read HSAEGGKHARVKEKEREH, REEQ…DKVK, PPRERFELGDGRKPGE, and QLKEEKMEERDLL. Residue Ser-115 is modified to Phosphoserine. At Ser-283 the chain carries Phosphoserine. Residues 291-302 are compositionally biased toward low complexity; that stretch reads SAESSSAESGSG. 2 stretches are compositionally biased toward acidic residues: residues 303–364 and 383–392; these read SEEE…EERE and ESEEAEEEVG. In terms of domain architecture, Protein kinase spans 438-723; it reads FQCLNRIEEG…AEDGLKHEYF (286 aa). ATP contacts are provided by residues 444–452 and Lys-467; that span reads IEEGTYGVV. Phosphoserine; by CDK7 is present on Ser-482. At Thr-488 the chain carries Phosphothreonine; by CDK7. The active-site Proton acceptor is the Asp-562. Position 589 is a phosphoserine (Ser-589). A Phosphotyrosine modification is found at Tyr-594. Position 595 is a phosphothreonine (Thr-595). A Glycyl lysine isopeptide (Lys-Gly) (interchain with G-Cter in SUMO2) cross-link involves residue Lys-641. The tract at residues 733–795 is disordered; that stretch reads SMFPTWPAKS…AAGPGFSLKF (63 aa). Thr-751 carries the post-translational modification Phosphothreonine. The residue at position 752 (Ser-752) is a Phosphoserine.

Belongs to the protein kinase superfamily. CMGC Ser/Thr protein kinase family. CDC2/CDKX subfamily. In terms of assembly, cleaved isoform SV9 (p110C) binds to the serine/threonine kinase PAK1 and RANBP9. p110C interacts with RNPS1. Isoform 7, but not isoform SV9, nor its cleavage product p110C, interacts with CCND3. Interacts with CCNL1 and CCNL2. Forms complexes with pre-mRNA-splicing factors, including at least SRSF1, SRSF2 and SRSF7/SLU7. Interacts with isoform 5 of MYO18A. As to quaternary structure, (Microbial infection) Interacts with human herpes virus 1 (HHV-1) transcriptional regulator ICP22. Mg(2+) is required as a cofactor. During FAS- or TNF-induced apoptosis, isoform SV9 is cleaved by caspases to produce p110C, a fragment that contains the C-terminal kinase domain. In terms of processing, phosphorylation at Ser-115 creates a binding site for 14-3-3 proteins. p110C can be autophosphorylated. As to expression, expressed ubiquitously. Some evidence of isoform-specific tissue distribution.

The protein localises to the cytoplasm. It is found in the nucleus. The enzyme catalyses L-seryl-[protein] + ATP = O-phospho-L-seryl-[protein] + ADP + H(+). The catalysed reaction is L-threonyl-[protein] + ATP = O-phospho-L-threonyl-[protein] + ADP + H(+). Its activity is regulated as follows. Phosphorylation at Thr-448 or Tyr-449 inactivates the enzyme, while phosphorylation at Thr-595 activates it. In terms of biological role, plays multiple roles in cell cycle progression, cytokinesis and apoptosis. Involved in pre-mRNA splicing in a kinase activity-dependent manner. Isoform 7 may act as a negative regulator of normal cell cycle progression. This is Cyclin-dependent kinase 11B (CDK11B) from Homo sapiens (Human).